A 72-amino-acid chain; its full sequence is uncharacterized protein (72 aa).

It belongs to the baculoviridae 8 kDa protein family.

This is an uncharacterized protein from Orgyia pseudotsugata (Douglas-fir tussock moth).